The sequence spans 539 residues: Keratin, type II cytoskeletal 73 (539 aa).

The tract at residues 1 to 130 is head; it reads MNRQFTCKPG…DPEIQKVRAQ (130 aa). Residues 131-166 form a coil 1A region; sequence EREQIKALNNKFASFIDKVRFLEQQNQVLQTKWELL. Residues 131–444 form the IF rod domain; it reads EREQIKALNN…KLLEGEECRM (314 aa). Residues 167–185 form a linker 1 region; that stretch reads QQLDLSNCRRNLEPVYEAH. Positions 186–277 are coil 1B; it reads ISSLQKQLDS…CLYEGEITQM (92 aa). Positions 278–301 are linker 12; that stretch reads QSHISDTSVVLSMDNNRNLDLDSI. The tract at residues 302–440 is coil 2; the sequence is IAEVRAQYED…ATYRKLLEGE (139 aa). Positions 441-539 are tail; the sequence is ECRMSGEHTS…LGSPSKKTMR (99 aa).

It belongs to the intermediate filament family. As to quaternary structure, heterotetramer of two type I and two type II keratins.

Functionally, has a role in hair formation. Specific component of keratin intermediate filaments in the inner root sheath (IRS) of the hair follicle. The chain is Keratin, type II cytoskeletal 73 (Krt73) from Mus musculus (Mouse).